The following is a 153-amino-acid chain: Ribosome maturation factor RimP (153 aa).

It belongs to the RimP family.

It localises to the cytoplasm. Required for maturation of 30S ribosomal subunits. This is Ribosome maturation factor RimP from Marinomonas sp. (strain MWYL1).